We begin with the raw amino-acid sequence, 173 residues long: Shikimate kinase 1 (173 aa).

14 to 19 (GAGKST) contacts ATP. Serine 18 serves as a coordination point for Mg(2+). Residues aspartate 36, arginine 60, and glycine 82 each contribute to the substrate site. Arginine 120 serves as a coordination point for ATP. Substrate is bound at residue arginine 140. Glutamine 157 is an ATP binding site.

It belongs to the shikimate kinase family. In terms of assembly, monomer. Mg(2+) is required as a cofactor.

The protein localises to the cytoplasm. It carries out the reaction shikimate + ATP = 3-phosphoshikimate + ADP + H(+). It functions in the pathway metabolic intermediate biosynthesis; chorismate biosynthesis; chorismate from D-erythrose 4-phosphate and phosphoenolpyruvate: step 5/7. Functionally, catalyzes the specific phosphorylation of the 3-hydroxyl group of shikimic acid using ATP as a cosubstrate. The sequence is that of Shikimate kinase 1 from Salmonella typhimurium (strain LT2 / SGSC1412 / ATCC 700720).